We begin with the raw amino-acid sequence, 482 residues long: tRNA sulfurtransferase (482 aa).

The THUMP domain maps to 61 to 165 (LAIRDALTRI…DDRLLLIKGR (105 aa)). ATP is bound by residues 183–184 (LI), lysine 265, glycine 287, and glutamine 296. Cysteine 344 and cysteine 456 are oxidised to a cystine. A Rhodanese domain is found at 404-482 (FGANDVILDI…GFANVKVYRP (79 aa)). Residue cysteine 456 is the Cysteine persulfide intermediate of the active site.

It belongs to the ThiI family.

Its subcellular location is the cytoplasm. It catalyses the reaction [ThiI sulfur-carrier protein]-S-sulfanyl-L-cysteine + a uridine in tRNA + 2 reduced [2Fe-2S]-[ferredoxin] + ATP + H(+) = [ThiI sulfur-carrier protein]-L-cysteine + a 4-thiouridine in tRNA + 2 oxidized [2Fe-2S]-[ferredoxin] + AMP + diphosphate. The enzyme catalyses [ThiS sulfur-carrier protein]-C-terminal Gly-Gly-AMP + S-sulfanyl-L-cysteinyl-[cysteine desulfurase] + AH2 = [ThiS sulfur-carrier protein]-C-terminal-Gly-aminoethanethioate + L-cysteinyl-[cysteine desulfurase] + A + AMP + 2 H(+). It participates in cofactor biosynthesis; thiamine diphosphate biosynthesis. Its function is as follows. Catalyzes the ATP-dependent transfer of a sulfur to tRNA to produce 4-thiouridine in position 8 of tRNAs, which functions as a near-UV photosensor. Also catalyzes the transfer of sulfur to the sulfur carrier protein ThiS, forming ThiS-thiocarboxylate. This is a step in the synthesis of thiazole, in the thiamine biosynthesis pathway. The sulfur is donated as persulfide by IscS. The protein is tRNA sulfurtransferase of Salmonella paratyphi B (strain ATCC BAA-1250 / SPB7).